The sequence spans 716 residues: MQSTANYLWHTDDLLGQGATASVYKARNKKSGELVAVKVFNTTSYLRPREVQVREFEVLRKLNHQNIVKLFAVEETGGSRQKVLVMEYCSSGSLLSVLESPENAFGLPEDEFLVVLRCVVAGMNHLRENGIVHRDIKPGNIMRLVGEEGQSIYKLTDFGAARELDDDEKFVSVYGTEEYLHPDMYERAVLRKPQQKAFGVTVDLWSIGVTLYHAATGSLPFIPFGGPRRNKEIMYRITTEKPAGAIAGAQRRENGPLEWSYTLPITCQLSLGLQSQLVPILANILEVEQAKCWGFDQFFAETSDILQRVVVHVFSLSQAVLHHIYIHAHNTIAIFQEAVHKQTSVAPRHQEYLFEGHLCVLEPSVSAQHIAHTTASSPLTLFSTAIPKGLAFRDPALDVPKFVPKVDLQADYNTAKGVLGAGYQALRLARALLDGQELMFRGLHWVMEVLQATCRRTLEVARTSLLYLSSSLGTERFSSVAGTPEIQELKAAAELRSRLRTLAEVLSRCSQNITETQESLSSLNRELVKSRDQVHEDRSIQQIQCCLDKMNFIYKQFKKSRMRPGLGYNEEQIHKLDKVNFSHLAKRLLQVFQEECVQKYQASLVTHGKRMRVVHETRNHLRLVGCSVAACNTEAQGVQESLSKLLEELSHQLLQDRAKGAQASPPPIAPYPSPTRKDLLLHMQELCEGMKLLASDLLDNNRIIERLNRVPAPPDV.

The 307-residue stretch at 9-315 (WHTDDLLGQG…LQRVVVHVFS (307 aa)) folds into the Protein kinase domain. 15 to 23 (LGQGATASV) lines the ATP pocket. Lys30 participates in a covalent cross-link: Glycyl lysine isopeptide (Lys-Gly) (interchain with G-Cter in ubiquitin). Residue Lys38 participates in ATP binding. Asp135 functions as the Proton acceptor in the catalytic mechanism. Residue Ser172 is modified to Phosphoserine; by autocatalysis and IKKB. Residue Lys231 forms a Glycyl lysine isopeptide (Lys-Gly) (interchain with G-Cter in SUMO1) linkage. The tract at residues 383-647 (STAIPKGLAF…VQESLSKLLE (265 aa)) is interaction with DDX3X. Lys401 is covalently cross-linked (Glycyl lysine isopeptide (Lys-Gly) (interchain with G-Cter in ubiquitin)). The leucine-zipper stretch occupies residues 436 to 457 (QELMFRGLHWVMEVLQATCRRT). Thr501 carries the post-translational modification Phosphothreonine. The residue at position 664 (Ser664) is a Phosphoserine.

Belongs to the protein kinase superfamily. Ser/Thr protein kinase family. I-kappa-B kinase subfamily. As to quaternary structure, homodimer. Interacts with MAVS/IPS1. Interacts (via protein kinase domain) with TTLL12 (via N-terminus); the interaction prevents MAVS binding to IKBKE. Interacts with the adapter proteins AZI2/NAP1, TANK and TBKBP1/SINTBAD. Interacts with SIKE1. Interacts with TICAM1/TRIF, IRF3 and RIGI; interactions are disrupted by the interaction between IKBKE and SIKE1. Interacts with TOPORS; induced by DNA damage. Interacts with CYLD. Interacts (when polyubiquitinated) with IKBKB, IKBKG and MYD88. Interacts with IFIH1. Interacts with DDX3X; the interaction may be induced upon virus infection. Interacts with TRIM6 (via SPRY box). Interacts with unanchored K48-linked polyubiquitin chains; this leads to IKBKE activation. Interacts with TBK1. Interacts with FKBP5. (Microbial infection) Interacts (via Protein kinase domain) with arenavirus protein N; the interaction inhibits IKBKE kinase function. In terms of assembly, (Microbial infection) Interacts with Ebola virus protein VP35; the interaction leads to inhibition of cellular antiviral response by blocking necessary interactions between the IKBKE and MAVS/IPS as well as its substrates IRF3 and IRF7. As to quaternary structure, (Microbial infection) Interacts with Severe fever with thrombocytopenia virus (SFTSV) NSs; this interaction this interaction sequesters IKBKE in NSs-induced cytoplasmic inclusion bodies thereby inhibiting the IFN responses. (Microbial infection) Interacts with human T-cell leukemia virus 1/HTLV-1 protein HBZ. In terms of assembly, (Microbial infection) Interacts with Epstein-Barr virus (EBV) protein NEC2/BFRF1; this interaction inhibits IKBKE kinase activity and IRF3 nuclear translocation. Autophosphorylated and phosphorylated by IKBKB/IKKB. Phosphorylation at Ser-172 is enhanced by the interaction with DDX3X. Phosphorylated at Thr-501 upon IFN activation. Post-translationally, sumoylation by TOPORS upon DNA damage is required for protection of cells against DNA damage-induced cell death. Desumoylated by SENP1. In terms of processing, 'Lys-63'-linked polyubiquitinated at Lys-30 and Lys-401 by TRAF2:BIRC2 and TRAF2:BIRC3 complexes. Ubiquitination is induced by LPS, TNFA and interleukin-1 and required for full kinase activity and KF-kappa-B pathway activation. Highly expressed in spleen followed by thymus, peripheral blood leukocytes, pancreas, placenta. Weakly expressed in lung, kidney, prostate, ovary and colon.

The protein resides in the cytoplasm. It is found in the nucleus. The protein localises to the PML body. It carries out the reaction L-seryl-[I-kappa-B protein] + ATP = O-phospho-L-seryl-[I-kappa-B protein] + ADP + H(+). In terms of biological role, serine/threonine kinase that plays an essential role in regulating inflammatory responses to viral infection, through the activation of the type I IFN, NF-kappa-B and STAT signaling. Also involved in TNFA and inflammatory cytokines, like Interleukin-1, signaling. Following activation of viral RNA sensors, such as RIG-I-like receptors, associates with DDX3X and phosphorylates interferon regulatory factors (IRFs), IRF3 and IRF7, as well as DDX3X. This activity allows subsequent homodimerization and nuclear translocation of the IRF3 leading to transcriptional activation of pro-inflammatory and antiviral genes including IFNB. In order to establish such an antiviral state, IKBKE forms several different complexes whose composition depends on the type of cell and cellular stimuli. Thus, several scaffolding molecules including IPS1/MAVS, TANK, AZI2/NAP1 or TBKBP1/SINTBAD can be recruited to the IKBKE-containing-complexes. Activated by polyubiquitination in response to TNFA and interleukin-1, regulates the NF-kappa-B signaling pathway through, at least, the phosphorylation of CYLD. Phosphorylates inhibitors of NF-kappa-B thus leading to the dissociation of the inhibitor/NF-kappa-B complex and ultimately the degradation of the inhibitor. In addition, is also required for the induction of a subset of ISGs which displays antiviral activity, may be through the phosphorylation of STAT1 at 'Ser-708'. Phosphorylation of STAT1 at 'Ser-708' also seems to promote the assembly and DNA binding of ISGF3 (STAT1:STAT2:IRF9) complexes compared to GAF (STAT1:STAT1) complexes, in this way regulating the balance between type I and type II IFN responses. Protects cells against DNA damage-induced cell death. Also plays an important role in energy balance regulation by sustaining a state of chronic, low-grade inflammation in obesity, wich leads to a negative impact on insulin sensitivity. Phosphorylates AKT1. The polypeptide is Inhibitor of nuclear factor kappa-B kinase subunit epsilon (IKBKE) (Homo sapiens (Human)).